A 453-amino-acid polypeptide reads, in one-letter code: Alpha-galacturonidase (453 aa).

11–72 lines the NAD(+) pocket; sequence IKIAYIGGGS…SQWEYKSVDS (62 aa). N151 contributes to the substrate binding site. Mn(2+) is bound at residue C173. The Proton donor role is filled by H174. Position 209 (H209) interacts with Mn(2+).

It belongs to the glycosyl hydrolase 4 family. As to quaternary structure, homotetramer. Requires NAD(+) as cofactor. Mn(2+) is required as a cofactor.

It carries out the reaction [(1-&gt;4)-alpha-D-galacturonosyl](n) + H2O = alpha-D-galacturonate + [(1-&gt;4)-alpha-D-galacturonosyl](n-1). In terms of biological role, alpha-galacturonidase able to catalyze the hydrolysis of the chromogenic substrate p-nitrophenyl-alpha-D-galacturonic acid (pNPalphaGalUA). It is probable that alpha-1,4-di-galacturonate (GalUA(2)) is the naturally occurring substrate. The protein is Alpha-galacturonidase of Thermoanaerobacter italicus (strain DSM 9252 / Ab9).